The sequence spans 526 residues: MIPDVSKALSWLEAHPKVLCGIHRGIERETLRVTPDGHLAATGHPVELGKSLTHKWITTDFAESLLEFITPVDDNIDHTLHFLSDLHRYTARHLTNERMWPMSMPCFIEAEDKITLAQFGTSNVGRFKTLYREGLKNRYGALMQTISGVHYNFSLPIEFWQAWANITDEETGKEAISDGYLRLIRNYYRFGWIIPFFFGASPAICGSFLKGRKTNLPFENTPKGAKYLPYATSLRLSDLGYTNKSQSDLDITFNHLETYVKGLKKAIHKPSEEFAKLGVKKDGKYIQLNTNVLQIENELYAPIRPKRVVKGDESPSDALLRGGIEYIEVRSLDINPFTPIGVDETQIRFLDLFLIWCVLADAPEMNAEELACCRANWNNVILEGRKPGQVIGMGCGERKEPLAQVGKALFADLQRVAKVLDSCSGTKYLEVCLKLEEMFDNPQLTFSGRLLEKIKAQGIGGYGLSLAEEYHQQLVNTAYEVLTDDAFEHERISSIKRQADLEKSDTISFDEYLKLHAGPNNDGVAS.

This sequence belongs to the glutamate--cysteine ligase type 1 family. Type 1 subfamily.

It catalyses the reaction L-cysteine + L-glutamate + ATP = gamma-L-glutamyl-L-cysteine + ADP + phosphate + H(+). Its pathway is sulfur metabolism; glutathione biosynthesis; glutathione from L-cysteine and L-glutamate: step 1/2. This Proteus mirabilis (strain HI4320) protein is Glutamate--cysteine ligase.